We begin with the raw amino-acid sequence, 267 residues long: Zerumbone synthase (267 aa).

Residue Leu9 to Cys33 coordinates NAD(+). Ser142 lines the substrate pocket. The active-site Proton acceptor is Tyr155.

This sequence belongs to the short-chain dehydrogenases/reductases (SDR) family. As to expression, expressed in leaves, stems and rhizomes.

It carries out the reaction 10-hydroxy-alpha-humulene + NAD(+) = zerumbone + NADH + H(+). Its function is as follows. Catalyzes 8-hydroxy-alpha-humulene into zerumbone in presence of NAD. Also converts borneol to camphor in vitro. Zerumbone is a highly promising multi-anticancer agent. This Zingiber zerumbet (Shampoo ginger) protein is Zerumbone synthase (ZSD1).